We begin with the raw amino-acid sequence, 212 residues long: Probable plastid-lipid-associated protein 11, chloroplastic (212 aa).

The N-terminal 25 residues, 1 to 25, are a transit peptide targeting the chloroplast; it reads MALALSLSACSPPLRRTRRAGFRTS.

This sequence belongs to the PAP/fibrillin family.

The protein localises to the plastid. The protein resides in the chloroplast thylakoid. This Arabidopsis thaliana (Mouse-ear cress) protein is Probable plastid-lipid-associated protein 11, chloroplastic (PAP11).